Consider the following 507-residue polypeptide: E3 ubiquitin-protein ligase TRIM31 (507 aa).

The RING-type zinc finger occupies 16–56 (CPICMEILQDPVTIDCGHNFCLQCISQVGKTSEKIQCPLCK). Residues 89-130 (KEDSRCQRHKEKLHYFCEQDGAFLCVVCRDSKDHKSHNVTLI) form a B box-type zinc finger. The Zn(2+) site is built by Cys94, His97, Cys116, and His122. Coiled coils occupy residues 176-241 (EKLK…LQSS) and 269-298 (EDLEKKCSEAKARHESIIKTLTELKDDMNA). Positions 315-507 (EKESWSLLQK…VACSHITLSP (193 aa)) constitute a B30.2/SPRY domain.

Belongs to the TRIM/RBCC family. As to quaternary structure, may form oligomers. Interacts with isoform p52shc of SHC1. Post-translationally, auto-ubiquitinated (in vitro). Highly expressed in the gastrointestrinal tract, with high expression in the small intestine, moderate in the large intestine and weak in the stomach and esophagus.

The protein resides in the cytoplasm. It is found in the mitochondrion. It catalyses the reaction S-ubiquitinyl-[E2 ubiquitin-conjugating enzyme]-L-cysteine + [acceptor protein]-L-lysine = [E2 ubiquitin-conjugating enzyme]-L-cysteine + N(6)-ubiquitinyl-[acceptor protein]-L-lysine.. Its pathway is protein modification; protein ubiquitination. E3 ubiquitin-protein ligase that acts as a regulator of antiviral immune response and inflammation by mediating ubiquitination of substrates. Acts as a regulator of innate immune defense against viruses by mediating 'Lys-63'-linked ubiquitination of MAVS, promoting MAVS polymerization and formation of three-stranded helical filaments on mitochondria. Acts as a negative regulator of the NLRP3 inflammasome by catalyzing 'Lys-48'-linked ubiquitination of NLRP3, leading to its degradation. Regulator of Src-induced anchorage independent cell growth. The sequence is that of E3 ubiquitin-protein ligase TRIM31 from Mus musculus (Mouse).